Here is a 373-residue protein sequence, read N- to C-terminus: Phosphoserine aminotransferase (373 aa).

R46 lines the L-glutamate pocket. Residues F104, T150, D172, and Q195 each coordinate pyridoxal 5'-phosphate. N6-(pyridoxal phosphate)lysine is present on K196. Residue 247–248 (NT) coordinates pyridoxal 5'-phosphate.

Belongs to the class-V pyridoxal-phosphate-dependent aminotransferase family. SerC subfamily. As to quaternary structure, homodimer. The cofactor is pyridoxal 5'-phosphate.

It localises to the cytoplasm. The enzyme catalyses O-phospho-L-serine + 2-oxoglutarate = 3-phosphooxypyruvate + L-glutamate. It carries out the reaction 4-(phosphooxy)-L-threonine + 2-oxoglutarate = (R)-3-hydroxy-2-oxo-4-phosphooxybutanoate + L-glutamate. It participates in amino-acid biosynthesis; L-serine biosynthesis; L-serine from 3-phospho-D-glycerate: step 2/3. It functions in the pathway cofactor biosynthesis; pyridoxine 5'-phosphate biosynthesis; pyridoxine 5'-phosphate from D-erythrose 4-phosphate: step 3/5. In terms of biological role, catalyzes the reversible conversion of 3-phosphohydroxypyruvate to phosphoserine and of 3-hydroxy-2-oxo-4-phosphonooxybutanoate to phosphohydroxythreonine. This is Phosphoserine aminotransferase from Rhodococcus jostii (strain RHA1).